The sequence spans 652 residues: DNA polymerase epsilon subunit B (652 aa).

This sequence belongs to the DNA polymerase epsilon subunit B family. Heterotetramer. Consists of four subunits: POL2, DPB2, DPB3 and DPB4.

It localises to the nucleus. As accessory component of the DNA polymerase epsilon (DNA polymerase II) participates in chromosomal DNA replication. This Yarrowia lipolytica (strain CLIB 122 / E 150) (Yeast) protein is DNA polymerase epsilon subunit B (DPB2).